A 79-amino-acid polypeptide reads, in one-letter code: Putative defensin-like protein 29 (79 aa).

The N-terminal stretch at 1–26 (MASSGKCVFLVFLCMVALLAPSEVHA) is a signal peptide. Intrachain disulfides connect Cys45–Cys65, Cys51–Cys74, and Cys55–Cys76.

Belongs to the DEFL family.

It localises to the secreted. The sequence is that of Putative defensin-like protein 29 from Arabidopsis thaliana (Mouse-ear cress).